Here is a 434-residue protein sequence, read N- to C-terminus: Eukaryotic translation initiation factor 3 subunit E (434 aa).

The 174-residue stretch at Phe219 to Leu392 folds into the PCI domain.

The protein belongs to the eIF-3 subunit E family. In terms of assembly, component of the eukaryotic translation initiation factor 3 (eIF-3) complex. The eIF-3 complex interacts with pix. Interacts with mxt.

The protein localises to the cytoplasm. Functionally, component of the eukaryotic translation initiation factor 3 (eIF-3) complex, which is involved in protein synthesis of a specialized repertoire of mRNAs and, together with other initiation factors, stimulates binding of mRNA and methionyl-tRNAi to the 40S ribosome. The eIF-3 complex specifically targets and initiates translation of a subset of mRNAs involved in cell proliferation. The polypeptide is Eukaryotic translation initiation factor 3 subunit E (eIF3-S6) (Drosophila pseudoobscura pseudoobscura (Fruit fly)).